Here is a 371-residue protein sequence, read N- to C-terminus: Peptide chain release factor 2 (371 aa).

Q253 bears the N5-methylglutamine mark.

The protein belongs to the prokaryotic/mitochondrial release factor family. In terms of processing, methylated by PrmC. Methylation increases the termination efficiency of RF2.

Its subcellular location is the cytoplasm. Peptide chain release factor 2 directs the termination of translation in response to the peptide chain termination codons UGA and UAA. This is Peptide chain release factor 2 from Mycobacterium marinum (strain ATCC BAA-535 / M).